The primary structure comprises 799 residues: ATP synthase subunit alpha (799 aa).

The interval 1-549 is ATP synthase alpha chain; that stretch reads MTDNKNHSLI…EEVSLKPTTE (549 aa). 170–177 is a binding site for ATP; sequence GDRQTGKT. A unknown region spans residues 550–799; sequence TSEAVQIEEK…KGPSGFTYLK (250 aa).

It belongs to the ATPase alpha/beta chains family. F-type ATPases have 2 components, CF(1) - the catalytic core - and CF(0) - the membrane proton channel. CF(1) has five subunits: alpha(3), beta(3), gamma(1), delta(1), epsilon(1). CF(0) has three main subunits: a(1), b(2) and c(9-12). The alpha and beta chains form an alternating ring which encloses part of the gamma chain. CF(1) is attached to CF(0) by a central stalk formed by the gamma and epsilon chains, while a peripheral stalk is formed by the delta and b chains.

The protein resides in the cell membrane. It catalyses the reaction ATP + H2O + 4 H(+)(in) = ADP + phosphate + 5 H(+)(out). Produces ATP from ADP in the presence of a proton gradient across the membrane. The alpha chain is a regulatory subunit. In Ureaplasma parvum serovar 3 (strain ATCC 27815 / 27 / NCTC 11736), this protein is ATP synthase subunit alpha (atpA).